The following is a 407-amino-acid chain: MSNVLDELIERGYAKQFTHEEETRKLLSEEKVTFYIGFDPTGDSLHVGHFIALMLMARMQKAGHRPIVLIGGGTAMVGDPTGKTDMRKMLTREEINHNVECLKKQMSRFIDFSDDKAIIVNNAEWLMGQNYIEFLREVGVHFSVNKMLTAECFKQRMEKGLSFLEFNYMLMQGFDFYKLNEKYDCKMELGGDDQWSNMIAGVELIRRKSNKKAYAMTSALLTNSEGKKMGKTEKGALWLDAEKTSPYDFFQYWRNVNDADVEKCLSMLTFLPMDEVRRLASLKDQEINKAKEVLAYEVTKLVHGEEEAKKALNSSKALFGGGTNMDNVPTVSIPEDMLSSSILDVLVHTKIIPSKGEGRRLVQQGGITLNDTKVEDFNYEITKEDFNDDGFALVRRGKKKYYKIVIG.

Tyr-35 contributes to the L-tyrosine binding site. A 'HIGH' region motif is present at residues 40 to 49; the sequence is PTGDSLHVGH. L-tyrosine is bound by residues Tyr-168 and Gln-172. Residues 228 to 232 carry the 'KMSKS' region motif; that stretch reads KMGKT. Lys-231 contacts ATP. Residues 340–406 enclose the S4 RNA-binding domain; that stretch reads SSILDVLVHT…GKKKYYKIVI (67 aa).

This sequence belongs to the class-I aminoacyl-tRNA synthetase family. TyrS type 1 subfamily. Homodimer.

It localises to the cytoplasm. It carries out the reaction tRNA(Tyr) + L-tyrosine + ATP = L-tyrosyl-tRNA(Tyr) + AMP + diphosphate + H(+). Catalyzes the attachment of tyrosine to tRNA(Tyr) in a two-step reaction: tyrosine is first activated by ATP to form Tyr-AMP and then transferred to the acceptor end of tRNA(Tyr). In Clostridium acetobutylicum (strain ATCC 824 / DSM 792 / JCM 1419 / IAM 19013 / LMG 5710 / NBRC 13948 / NRRL B-527 / VKM B-1787 / 2291 / W), this protein is Tyrosine--tRNA ligase 1.